An 82-amino-acid polypeptide reads, in one-letter code: MYPLAFAKEGEEVIVKKIDAGCGAMQRLVSMGINIGSKLKVIRNQNGPVIISTKGSNIAIGRGLAMKIMVEDAEYGGENEKL.

It belongs to the FeoA family.

Its function is as follows. Might be involved in Fe(2+) ion uptake. The sequence is that of Putative Fe(2+) transport protein A from Methanocaldococcus jannaschii (strain ATCC 43067 / DSM 2661 / JAL-1 / JCM 10045 / NBRC 100440) (Methanococcus jannaschii).